Reading from the N-terminus, the 181-residue chain is Protein Syd (181 aa).

The protein belongs to the Syd family.

It localises to the cell inner membrane. In terms of biological role, interacts with the SecY protein in vivo. May bind preferentially to an uncomplexed state of SecY, thus functioning either as a chelating agent for excess SecY in the cell or as a regulatory factor that negatively controls the translocase function. The polypeptide is Protein Syd (Enterobacter sp. (strain 638)).